We begin with the raw amino-acid sequence, 151 residues long: Transcription antitermination protein NusB (151 aa).

The protein belongs to the NusB family.

Functionally, involved in transcription antitermination. Required for transcription of ribosomal RNA (rRNA) genes. Binds specifically to the boxA antiterminator sequence of the ribosomal RNA (rrn) operons. The polypeptide is Transcription antitermination protein NusB (Thermus thermophilus (strain ATCC BAA-163 / DSM 7039 / HB27)).